We begin with the raw amino-acid sequence, 291 residues long: DegV domain-containing protein CPE0026 (291 aa).

The DegV domain maps to 4-286 (FVIFTDSAAD…IGTLAVFFLG (283 aa)). Hexadecanoate contacts are provided by T63 and S95.

May bind long-chain fatty acids, such as palmitate, and may play a role in lipid transport or fatty acid metabolism. In Clostridium perfringens (strain 13 / Type A), this protein is DegV domain-containing protein CPE0026.